A 570-amino-acid chain; its full sequence is Rqc2 homolog RqcH (570 aa).

An NFACT-N domain region spans residues 1-173 (MSFDGMFTYG…LPPAQDKISP (173 aa)). Residues 179–281 (DDILRHLSFQ…ELLDRFYFGK (103 aa)) form a hhH domain region. Coiled-coil stretches lie at residues 279 to 336 (FGKA…TANL) and 368 to 430 (TPSE…VEGK). Residues 282–434 (AERDRVKQQA…ELVEGKYLRP (153 aa)) are coiled-coil-M (CCM). Positions 446 to 570 (HNPVLETYES…ADTVIKLKKS (125 aa)) are NFACT-R.

The protein belongs to the NEMF family. As to quaternary structure, associates with isolated or stalled 50S ribosomal subunits. Binds to RqcP. Interacts with ribosomal protein uL11. Displaced from the 50S subunit by thiostrepton. In crystallized 50S subunits RqcH is variously associated with A/P-site tRNA, P-site tRNA and RqcP, an E-site tRNA or A- and P-site tRNAs and RqcP2(YlmH).

Functionally, key component of the ribosome quality control system (RQC), a ribosome-associated complex that mediates the extraction of incompletely synthesized nascent chains from stalled ribosomes and their subsequent degradation. RqcH recruits Ala-charged tRNA, and with RqcP directs the elongation of stalled nascent chains on 50S ribosomal subunits, leading to non-templated C-terminal alanine extensions (Ala tail). The Ala tail promotes nascent chain degradation. RqcH, RqcP and charged tRNA(Ala) are necessary and sufficient to add an Ala tail to a model stalled nascent peptide; does not add Val. Binds the P-site tRNA in 50S ribosomal subunit, unwinds the anticodon stem and interacts with the splayed anticodon. Selectively binds tRNA(Ala) isoacceptors, even in the absence of the 50S ribosomal subunit. Adds between 1 and at least 8 Ala residues to the nascent chain; detection of the Ala tail requires either deletion of clpP or its inhibition. Binds to 50S ribosomal subunits, at least 30% of which contain a P-site tRNA and thus are obstructed. The protein is Rqc2 homolog RqcH of Bacillus subtilis (strain 168).